A 238-amino-acid polypeptide reads, in one-letter code: Flagellar L-ring protein (238 aa).

An N-terminal signal peptide occupies residues 1-23 (MIKLFICQKKYYLTAIFLLTIQS). Residue Cys24 is the site of N-palmitoyl cysteine attachment. Cys24 is lipidated: S-diacylglycerol cysteine.

Belongs to the FlgH family. In terms of assembly, the basal body constitutes a major portion of the flagellar organelle and consists of four rings (L,P,S, and M) mounted on a central rod.

The protein localises to the cell outer membrane. It is found in the bacterial flagellum basal body. Assembles around the rod to form the L-ring and probably protects the motor/basal body from shearing forces during rotation. This chain is Flagellar L-ring protein, found in Buchnera aphidicola subsp. Acyrthosiphon pisum (strain 5A).